Here is a 201-residue protein sequence, read N- to C-terminus: Small ribosomal subunit protein uS4 (201 aa).

The region spanning 91 to 157 (SRLDNVIYRA…VPFQIARETA (67 aa)) is the S4 RNA-binding domain.

This sequence belongs to the universal ribosomal protein uS4 family. Part of the 30S ribosomal subunit. Contacts protein S5. The interaction surface between S4 and S5 is involved in control of translational fidelity.

One of the primary rRNA binding proteins, it binds directly to 16S rRNA where it nucleates assembly of the body of the 30S subunit. Its function is as follows. With S5 and S12 plays an important role in translational accuracy. The chain is Small ribosomal subunit protein uS4 from Mycobacterium tuberculosis (strain ATCC 25177 / H37Ra).